The chain runs to 300 residues: Ribosomal RNA small subunit methyltransferase H (300 aa).

S-adenosyl-L-methionine is bound by residues 43-45 (AGH), Asp-60, Asp-105, and Gln-112.

This sequence belongs to the methyltransferase superfamily. RsmH family.

Its subcellular location is the cytoplasm. The enzyme catalyses cytidine(1402) in 16S rRNA + S-adenosyl-L-methionine = N(4)-methylcytidine(1402) in 16S rRNA + S-adenosyl-L-homocysteine + H(+). In terms of biological role, specifically methylates the N4 position of cytidine in position 1402 (C1402) of 16S rRNA. The chain is Ribosomal RNA small subunit methyltransferase H from Deinococcus deserti (strain DSM 17065 / CIP 109153 / LMG 22923 / VCD115).